We begin with the raw amino-acid sequence, 749 residues long: Protein lin-54 homolog (749 aa).

K139 participates in a covalent cross-link: Glycyl lysine isopeptide (Lys-Gly) (interchain with G-Cter in SUMO2). 2 positions are modified to N6-acetyllysine: K244 and K249. Phosphoserine occurs at positions 264, 282, 310, and 314. A Glycyl lysine isopeptide (Lys-Gly) (interchain with G-Cter in SUMO2) cross-link involves residue K357. Residues 521-634 (PRKPCNCTKS…KCIGCKNFEE (114 aa)) enclose the CRC domain. The segment at 523–536 (KPCNCTKSLCLKLY) is DNA-binding. Zn(2+) is bound by residues C525, C527, C532, C537, C539, C546, C549, C551, and C554. A linker region spans residues 583–596 (IGKGKEGESDRRHS). Residues C599, C601, C606, C611, C613, C620, C624, C626, and C629 each contribute to the Zn(2+) site. Residues 599 to 612 (CNCKRSGCLKNYCE) form a DNA-binding region. Phosphoserine is present on S635. Glycyl lysine isopeptide (Lys-Gly) (interchain with G-Cter in SUMO2) cross-links involve residues K639, K659, and K661.

This sequence belongs to the lin-54 family. As to quaternary structure, component of the DREAM complex (also named LINC complex) at least composed of E2F4, E2F5, LIN9, LIN37, LIN52, LIN54, MYBL1, MYBL2, RBL1, RBL2, RBBP4, RBL2, TFDP1 and TFDP2. The complex exists in quiescent cells where it represses cell cycle-dependent genes. It dissociates in S phase when LIN9, LIN37, LIN52 and LIN54 form a subcomplex that binds to MYBL2.

It is found in the nucleus. Component of the DREAM complex, a multiprotein complex that can both act as a transcription activator or repressor depending on the context. In G0 phase, the complex binds to more than 800 promoters and is required for repression of E2F target genes. In S phase, the complex selectively binds to the promoters of G2/M genes whose products are required for mitosis and participates in their cell cycle dependent activation. In the complex, acts as a DNA-binding protein that binds the promoter of CDK1 in a sequence-specific manner. Specifically recognizes the consensus motif 5'-TTYRAA-3' in target DNA. This Rattus norvegicus (Rat) protein is Protein lin-54 homolog (Lin54).